A 452-amino-acid chain; its full sequence is Xaa-Pro dipeptidase 1 (452 aa).

Mn(2+)-binding residues include aspartate 247, aspartate 258, histidine 338, glutamate 383, and glutamate 422.

Belongs to the peptidase M24B family. Bacterial-type prolidase subfamily. Requires Mn(2+) as cofactor.

The catalysed reaction is Xaa-L-Pro dipeptide + H2O = an L-alpha-amino acid + L-proline. Functionally, splits dipeptides with a prolyl residue in the C-terminal position. This is Xaa-Pro dipeptidase 1 from Idiomarina loihiensis (strain ATCC BAA-735 / DSM 15497 / L2-TR).